A 294-amino-acid chain; its full sequence is Probable endonuclease 4 (294 aa).

The Zn(2+) site is built by H71, H111, E148, D182, H185, H217, D230, H232, and E262.

This sequence belongs to the AP endonuclease 2 family. It depends on Zn(2+) as a cofactor.

It carries out the reaction Endonucleolytic cleavage to 5'-phosphooligonucleotide end-products.. Its function is as follows. Endonuclease IV plays a role in DNA repair. It cleaves phosphodiester bonds at apurinic or apyrimidinic (AP) sites, generating a 3'-hydroxyl group and a 5'-terminal sugar phosphate. This is Probable endonuclease 4 from Acholeplasma laidlawii (strain PG-8A).